Here is a 156-residue protein sequence, read N- to C-terminus: ATP synthase subunit b (156 aa).

A helical transmembrane segment spans residues 11 to 31 (LIAFALFVWFCMKFVWPPIIN).

This sequence belongs to the ATPase B chain family. F-type ATPases have 2 components, F(1) - the catalytic core - and F(0) - the membrane proton channel. F(1) has five subunits: alpha(3), beta(3), gamma(1), delta(1), epsilon(1). F(0) has three main subunits: a(1), b(2) and c(10-14). The alpha and beta chains form an alternating ring which encloses part of the gamma chain. F(1) is attached to F(0) by a central stalk formed by the gamma and epsilon chains, while a peripheral stalk is formed by the delta and b chains.

The protein resides in the cell inner membrane. Its function is as follows. F(1)F(0) ATP synthase produces ATP from ADP in the presence of a proton or sodium gradient. F-type ATPases consist of two structural domains, F(1) containing the extramembraneous catalytic core and F(0) containing the membrane proton channel, linked together by a central stalk and a peripheral stalk. During catalysis, ATP synthesis in the catalytic domain of F(1) is coupled via a rotary mechanism of the central stalk subunits to proton translocation. Functionally, component of the F(0) channel, it forms part of the peripheral stalk, linking F(1) to F(0). The sequence is that of ATP synthase subunit b from Haemophilus influenzae (strain 86-028NP).